The chain runs to 91 residues: Elongation factor 1-beta (91 aa).

Belongs to the EF-1-beta/EF-1-delta family.

Functionally, promotes the exchange of GDP for GTP in EF-1-alpha/GDP, thus allowing the regeneration of EF-1-alpha/GTP that could then be used to form the ternary complex EF-1-alpha/GTP/AAtRNA. This chain is Elongation factor 1-beta, found in Thermococcus gammatolerans (strain DSM 15229 / JCM 11827 / EJ3).